The chain runs to 196 residues: Peptidyl-tRNA hydrolase (196 aa).

Tyr18 contributes to the tRNA binding site. The active-site Proton acceptor is His23. 3 residues coordinate tRNA: Phe69, Asn71, and Asn117.

Belongs to the PTH family. As to quaternary structure, monomer.

It localises to the cytoplasm. It carries out the reaction an N-acyl-L-alpha-aminoacyl-tRNA + H2O = an N-acyl-L-amino acid + a tRNA + H(+). Functionally, hydrolyzes ribosome-free peptidyl-tRNAs (with 1 or more amino acids incorporated), which drop off the ribosome during protein synthesis, or as a result of ribosome stalling. Its function is as follows. Catalyzes the release of premature peptidyl moieties from peptidyl-tRNA molecules trapped in stalled 50S ribosomal subunits, and thus maintains levels of free tRNAs and 50S ribosomes. The sequence is that of Peptidyl-tRNA hydrolase from Vibrio cholerae serotype O1 (strain ATCC 39315 / El Tor Inaba N16961).